Reading from the N-terminus, the 114-residue chain is Aspartate 1-decarboxylase (114 aa).

The active-site Schiff-base intermediate with substrate; via pyruvic acid is the Ser-25. Residue Ser-25 is modified to Pyruvic acid (Ser). Substrate is bound at residue Thr-57. Tyr-58 serves as the catalytic Proton donor. 71–73 contacts substrate; it reads GAA.

The protein belongs to the PanD family. In terms of assembly, heterooctamer of four alpha and four beta subunits. It depends on pyruvate as a cofactor. In terms of processing, is synthesized initially as an inactive proenzyme, which is activated by self-cleavage at a specific serine bond to produce a beta-subunit with a hydroxyl group at its C-terminus and an alpha-subunit with a pyruvoyl group at its N-terminus.

Its subcellular location is the cytoplasm. It catalyses the reaction L-aspartate + H(+) = beta-alanine + CO2. It functions in the pathway cofactor biosynthesis; (R)-pantothenate biosynthesis; beta-alanine from L-aspartate: step 1/1. Catalyzes the pyruvoyl-dependent decarboxylation of aspartate to produce beta-alanine. The sequence is that of Aspartate 1-decarboxylase from Haloquadratum walsbyi (strain DSM 16790 / HBSQ001).